A 154-amino-acid polypeptide reads, in one-letter code: Photosystem II extrinsic protein U, chloroplastic (154 aa).

The transit peptide at 1-36 (MAFISTPLGKVTVKSATVSANRRGLRMQSDSEPVVS) directs the protein to the chloroplast. The transit peptide at 37–61 (RRALLSGALAAAVAAALARARPAQA) directs the protein to the thylakoid.

It belongs to the PsbU family. In terms of assembly, PSII is composed of 1 copy each of membrane proteins PsbA, PsbB, PsbC, PsbD, PsbE, PsbF, PsbH, PsbI, PsbJ, PsbK, PsbL, PsbM, PsbT, PsbY, PsbZ, Psb30/Ycf12, at least 3 peripheral proteins of the oxygen-evolving complex and a large number of cofactors. It forms dimeric complexes. The extrinsic subunits in red algae are PsbO (OEC33), PsbQ', cytochrome c-550 and PsbU. Post-translationally, predicted to be translocated into the thylakoid lumen by the Tat system. The position of the first transit peptide cleavage has not been experimentally proven.

The protein resides in the plastid. Its subcellular location is the chloroplast thylakoid membrane. In terms of biological role, one of the extrinsic, lumenal subunits of photosystem II (PSII). PSII is a light-driven water plastoquinone oxidoreductase, using light energy to abstract electrons from H(2)O, generating a proton gradient subsequently used for ATP formation. The extrinsic proteins stabilize the structure of photosystem II oxygen-evolving complex (OEC), the ion environment of oxygen evolution and protect the OEC against heat-induced inactivation. The protein is Photosystem II extrinsic protein U, chloroplastic of Cyanidium caldarium (Red alga).